A 273-amino-acid polypeptide reads, in one-letter code: Tryptase-2 (273 aa).

An N-terminal signal peptide occupies residues 1–18 (MLHLLALALLLSLVSAAP). A propeptide spans 19 to 28 (APGQALQRSG) (activation peptide). The 242-residue stretch at 29–270 (IIGGKEAPGS…YLDWIHQYVP (242 aa)) folds into the Peptidase S1 domain. Residues Cys57 and Cys73 are joined by a disulfide bond. Catalysis depends on charge relay system residues His72 and Asp119. 3 disulfides stabilise this stretch: Cys153/Cys228, Cys186/Cys209, and Cys218/Cys246. Ser222 functions as the Charge relay system in the catalytic mechanism. A glycan (N-linked (GlcNAc...) asparagine) is linked at Asn231.

It belongs to the peptidase S1 family. Tryptase subfamily. As to quaternary structure, homotetramer.

It localises to the secreted. The enzyme catalyses Preferential cleavage: Arg-|-Xaa, Lys-|-Xaa, but with more restricted specificity than trypsin.. Functionally, tryptase is the major neutral protease present in mast cells and is secreted upon the coupled activation-degranulation response of this cell type. This chain is Tryptase-2, found in Ovis aries (Sheep).